Here is a 100-residue protein sequence, read N- to C-terminus: Urease subunit gamma (100 aa).

The protein belongs to the urease gamma subunit family. Heterotrimer of UreA (gamma), UreB (beta) and UreC (alpha) subunits. Three heterotrimers associate to form the active enzyme.

The protein localises to the cytoplasm. It carries out the reaction urea + 2 H2O + H(+) = hydrogencarbonate + 2 NH4(+). Its pathway is nitrogen metabolism; urea degradation; CO(2) and NH(3) from urea (urease route): step 1/1. This chain is Urease subunit gamma, found in Chelativorans sp. (strain BNC1).